The primary structure comprises 192 residues: Large ribosomal subunit protein uL3 (192 aa).

The protein belongs to the universal ribosomal protein uL3 family. In terms of assembly, part of the 50S ribosomal subunit. Forms a cluster with proteins L14 and L19.

One of the primary rRNA binding proteins, it binds directly near the 3'-end of the 23S rRNA, where it nucleates assembly of the 50S subunit. The polypeptide is Large ribosomal subunit protein uL3 (rplC) (Wolinella succinogenes (strain ATCC 29543 / DSM 1740 / CCUG 13145 / JCM 31913 / LMG 7466 / NCTC 11488 / FDC 602W) (Vibrio succinogenes)).